The sequence spans 890 residues: Alanine--tRNA ligase (890 aa).

Histidine 565, histidine 569, cysteine 677, and histidine 681 together coordinate Zn(2+).

This sequence belongs to the class-II aminoacyl-tRNA synthetase family. The cofactor is Zn(2+).

The protein resides in the cytoplasm. It catalyses the reaction tRNA(Ala) + L-alanine + ATP = L-alanyl-tRNA(Ala) + AMP + diphosphate. Its function is as follows. Catalyzes the attachment of alanine to tRNA(Ala) in a two-step reaction: alanine is first activated by ATP to form Ala-AMP and then transferred to the acceptor end of tRNA(Ala). Also edits incorrectly charged Ser-tRNA(Ala) and Gly-tRNA(Ala) via its editing domain. The polypeptide is Alanine--tRNA ligase (Zymomonas mobilis subsp. mobilis (strain ATCC 31821 / ZM4 / CP4)).